The following is a 276-amino-acid chain: NH(3)-dependent NAD(+) synthetase (276 aa).

43–50 provides a ligand contact to ATP; that stretch reads GISGGVDS. Aspartate 49 is a Mg(2+) binding site. Arginine 146 is a deamido-NAD(+) binding site. Threonine 166 lines the ATP pocket. A Mg(2+)-binding site is contributed by glutamate 171. Residues lysine 179 and aspartate 186 each contribute to the deamido-NAD(+) site. The ATP site is built by lysine 195 and threonine 217. A deamido-NAD(+)-binding site is contributed by 266–267; it reads HK.

Belongs to the NAD synthetase family. Homodimer.

It carries out the reaction deamido-NAD(+) + NH4(+) + ATP = AMP + diphosphate + NAD(+) + H(+). It functions in the pathway cofactor biosynthesis; NAD(+) biosynthesis; NAD(+) from deamido-NAD(+) (ammonia route): step 1/1. Its function is as follows. Catalyzes the ATP-dependent amidation of deamido-NAD to form NAD. Uses ammonia as a nitrogen source. This is NH(3)-dependent NAD(+) synthetase from Vibrio atlanticus (strain LGP32) (Vibrio splendidus (strain Mel32)).